A 112-amino-acid chain; its full sequence is Nitrogenase-stabilizing/protective protein NifW (112 aa).

This sequence belongs to the NifW family. In terms of assembly, homotrimer; associates with NifD.

Its function is as follows. May protect the nitrogenase Fe-Mo protein from oxidative damage. In Paraburkholderia xenovorans (strain LB400), this protein is Nitrogenase-stabilizing/protective protein NifW.